A 1044-amino-acid chain; its full sequence is Carbamoyl phosphate synthase large chain (1044 aa).

The tract at residues 1 to 398 (MPKREDISKI…ALMKAIASLD (398 aa)) is carboxyphosphate synthetic domain. Positions 129, 169, 175, 176, 208, 210, 215, 241, 242, 243, 284, and 296 each coordinate ATP. Positions 133-325 (HDFLISIGER…IARIAAKIAV (193 aa)) constitute an ATP-grasp 1 domain. Mg(2+) contacts are provided by glutamine 284, glutamate 296, and asparagine 298. Positions 284, 296, and 298 each coordinate Mn(2+). Residues 399-539 (IDLSYRLRLY…YSTYEDEDEL (141 aa)) form an oligomerization domain region. The tract at residues 540–916 (PGISGFVAII…AIRKSILRDI (377 aa)) is carbamoyl phosphate synthetic domain. The ATP-grasp 2 domain occupies 665–854 (SKRLEAMGID…WVELAVSAIM (190 aa)). ATP contacts are provided by arginine 701, lysine 738, leucine 740, glutamate 745, glycine 770, valine 771, histidine 772, serine 773, glutamine 813, and glutamate 825. Mg(2+) contacts are provided by glutamine 813, glutamate 825, and asparagine 827. 3 residues coordinate Mn(2+): glutamine 813, glutamate 825, and asparagine 827. Positions 911–1044 (SILRDIKSVF…IDYREISSYH (134 aa)) constitute an MGS-like domain. The interval 916–1044 (IKSVFISVRD…IDYREISSYH (129 aa)) is allosteric domain.

The protein belongs to the CarB family. As to quaternary structure, composed of two chains; the small (or glutamine) chain promotes the hydrolysis of glutamine to ammonia, which is used by the large (or ammonia) chain to synthesize carbamoyl phosphate. Tetramer of heterodimers (alpha,beta)4. It depends on Mg(2+) as a cofactor. Mn(2+) serves as cofactor.

The enzyme catalyses hydrogencarbonate + L-glutamine + 2 ATP + H2O = carbamoyl phosphate + L-glutamate + 2 ADP + phosphate + 2 H(+). It carries out the reaction hydrogencarbonate + NH4(+) + 2 ATP = carbamoyl phosphate + 2 ADP + phosphate + 2 H(+). Its pathway is amino-acid biosynthesis; L-arginine biosynthesis; carbamoyl phosphate from bicarbonate: step 1/1. It participates in pyrimidine metabolism; UMP biosynthesis via de novo pathway; (S)-dihydroorotate from bicarbonate: step 1/3. Its function is as follows. Large subunit of the glutamine-dependent carbamoyl phosphate synthetase (CPSase). CPSase catalyzes the formation of carbamoyl phosphate from the ammonia moiety of glutamine, carbonate, and phosphate donated by ATP, constituting the first step of 2 biosynthetic pathways, one leading to arginine and/or urea and the other to pyrimidine nucleotides. The large subunit (synthetase) binds the substrates ammonia (free or transferred from glutamine from the small subunit), hydrogencarbonate and ATP and carries out an ATP-coupled ligase reaction, activating hydrogencarbonate by forming carboxy phosphate which reacts with ammonia to form carbamoyl phosphate. This Thermoplasma volcanium (strain ATCC 51530 / DSM 4299 / JCM 9571 / NBRC 15438 / GSS1) protein is Carbamoyl phosphate synthase large chain.